A 444-amino-acid polypeptide reads, in one-letter code: 23S rRNA (uracil(1939)-C(5))-methyltransferase RlmD (444 aa).

The region spanning 5 to 67 (RNRLDRTPFQ…RHFDEAKTVE (63 aa)) is the TRAM domain. Residues Cys-80, Cys-86, Cys-89, and Cys-168 each contribute to the [4Fe-4S] cluster site. The S-adenosyl-L-methionine site is built by Gln-276, Phe-305, Asn-310, Glu-326, Asp-353, and Asp-374. Cys-400 functions as the Nucleophile in the catalytic mechanism.

It belongs to the class I-like SAM-binding methyltransferase superfamily. RNA M5U methyltransferase family. RlmD subfamily.

It catalyses the reaction uridine(1939) in 23S rRNA + S-adenosyl-L-methionine = 5-methyluridine(1939) in 23S rRNA + S-adenosyl-L-homocysteine + H(+). Functionally, catalyzes the formation of 5-methyl-uridine at position 1939 (m5U1939) in 23S rRNA. In Xanthomonas euvesicatoria pv. vesicatoria (strain 85-10) (Xanthomonas campestris pv. vesicatoria), this protein is 23S rRNA (uracil(1939)-C(5))-methyltransferase RlmD.